We begin with the raw amino-acid sequence, 528 residues long: Vacuolar fusion protein MON1 homolog (528 aa).

The span at Met1–Cys16 shows a compositional bias: polar residues. The tract at residues Met1–Glu50 is disordered.

Belongs to the MON1/SAND family. In terms of assembly, component of the Mon1-Ccz1 guanyl-nucleotide exchange factor complex made up of Mon1, Ccz1 and Bulli; the interaction of Bulli with the Mon1-Ccz1 heterodimer is mediated via the C-terminal Mic1 domain of Bulli. Mon1 and Ccz1 form a stable complex which displays Rab7 GEF activity with or without Bulli; GEF activity is enhanced by Bulli possibly by improving membrane association of the complex. Interacts with Rab5 and Rab7; preferentially binds GTP-bound Rab5 and GDP-bound Rab7.

The protein resides in the cytoplasm. The protein localises to the cytosol. With respect to regulation, the Rab7 guanyl-nucleotide exchange factor (GEF) activity of the Mon1-Ccz1 complex is autoinhibited by the N-terminal disordered region of Mon1. GEF activity is stimulated by Rab5-mediated recruitment to membranes. In terms of biological role, part of the Mon1-Ccz1 guanyl-nucleotide exchange factor complex specific for Rab7 that promotes the exchange of GDP to GTP, converting Rab7 from an inactive GDP-bound form into an active GTP-bound form. Plays an important role in membrane trafficking through the secretory apparatus. Required for recruitment of Rab7 to endosomal and autophagosomal membranes to mediate endolysosomal and autolysosomal vesicle maturation. Required for fusion of multivesicular bodies and lysosomes but not their formation or trafficking. Involved in the replacement of Rab5 (and possibly Rab4) with Rab7, also known as Rab conversion or the Rab cascade, during endosomal maturation. The Mon1-Ccz1 complex is recruited to phosphatidylinositol 3-phosphate (PtdIns[3]P) enriched membranes by Rab5, which stimulates recruitment and guanyl-nucleotide exchange of Rab7. Together with Rab7 required for autolysosome formation in fat cells and autophagic degradation during starvation-induced basal and developmental autophagy. Involved in neuromuscular junction (NMJ) presynaptic bouton function and morphogenesis. Together with Rab7, regulates levels of postsynaptic glutamate receptor GluRIIA in the NMJ presynapse. The sequence is that of Vacuolar fusion protein MON1 homolog from Drosophila melanogaster (Fruit fly).